The chain runs to 291 residues: Phytanoyl-CoA dioxygenase domain-containing protein 1 (291 aa).

T55 carries the post-translational modification Phosphothreonine. 2-oxoglutarate-binding positions include K102, M141, 156–158 (HQD), and W174. Residues H156 and D158 each contribute to the Fe cation site. H246 lines the Fe cation pocket. The 2-oxoglutarate site is built by S248 and R257.

Belongs to the PhyH family. PHYHD1 subfamily. Fe cation serves as cofactor.

Its activity is regulated as follows. Activity is increased by ascorbate. Inhibited by myristoyl-CoA. Functionally, 2-oxoglutarate(2OG)-dependent dioxygenase that catalyzes the conversion of 2-oxoglutarate to succinate and CO(2) in an iron-dependent manner. However, does not couple 2OG turnover to the hydroxylation of acyl-coenzyme A derivatives, implying that it is not directly involved in phytanoyl coenzyme-A metabolism. Does not show detectable activity towards fatty acid CoA thioesters. In terms of biological role, isoform 2 probably lacks enzyme activity. Isoform 3 probably lacks enzyme activity. The sequence is that of Phytanoyl-CoA dioxygenase domain-containing protein 1 from Homo sapiens (Human).